A 531-amino-acid polypeptide reads, in one-letter code: 2-isopropylmalate synthase (531 aa).

The Pyruvate carboxyltransferase domain occupies 8-284; the sequence is IIIFDTTLRD…LTNIDTKQIY (277 aa). Mn(2+)-binding residues include Asp-17, His-208, His-210, and Asn-244. The regulatory domain stretch occupies residues 408-531; that stretch reads RVELVQVSCG…TQDKQTEVTA (124 aa).

This sequence belongs to the alpha-IPM synthase/homocitrate synthase family. LeuA type 1 subfamily. Homodimer. Requires Mn(2+) as cofactor.

The protein resides in the cytoplasm. It carries out the reaction 3-methyl-2-oxobutanoate + acetyl-CoA + H2O = (2S)-2-isopropylmalate + CoA + H(+). It functions in the pathway amino-acid biosynthesis; L-leucine biosynthesis; L-leucine from 3-methyl-2-oxobutanoate: step 1/4. Functionally, catalyzes the condensation of the acetyl group of acetyl-CoA with 3-methyl-2-oxobutanoate (2-ketoisovalerate) to form 3-carboxy-3-hydroxy-4-methylpentanoate (2-isopropylmalate). In Nostoc sp. (strain PCC 7120 / SAG 25.82 / UTEX 2576), this protein is 2-isopropylmalate synthase.